The following is a 652-amino-acid chain: Coiled-coil domain-containing protein 81 (652 aa).

Serine 206 carries the phosphoserine modification. The span at 238 to 256 shows a compositional bias: basic and acidic residues; it reads KCKLKDQSDKEEGTRDISS. Residues 238–258 are disordered; that stretch reads KCKLKDQSDKEEGTRDISSPK. Phosphoserine occurs at positions 275, 296, and 417. A coiled-coil region spans residues 436-493; the sequence is MDNRQENEIKQRQYRELMDRLEQVQLTEELAAQRAKFLKDKMEETQCYKRALDAQIKN.

Its subcellular location is the cytoplasm. It localises to the cytoskeleton. The protein resides in the microtubule organizing center. The protein localises to the centrosome. The polypeptide is Coiled-coil domain-containing protein 81 (CCDC81) (Homo sapiens (Human)).